A 175-amino-acid chain; its full sequence is Phytochrome-interacting ankyrin-repeat protein 1 (175 aa).

ANK repeat units follow at residues 30–59, 67–96, and 102–131; these read RGWT…DVNA, KGMT…NMEA, and CGWT…FLPD.

In terms of assembly, interacts with phytochrome A (PHYA), both in Pr and Pfr forms.

The protein resides in the cytoplasm. It localises to the nucleus. The protein localises to the mitochondrion. In Arabidopsis thaliana (Mouse-ear cress), this protein is Phytochrome-interacting ankyrin-repeat protein 1.